A 203-amino-acid chain; its full sequence is LexA repressor (203 aa).

The segment at residues 30 to 50 is a DNA-binding region (H-T-H motif); it reads VREICQAVSLKSTSTVHGHLK. Active-site for autocatalytic cleavage activity residues include Ser-127 and Lys-164.

Belongs to the peptidase S24 family. Homodimer.

The catalysed reaction is Hydrolysis of Ala-|-Gly bond in repressor LexA.. Functionally, represses a number of genes involved in the response to DNA damage (SOS response), including recA and lexA. In the presence of single-stranded DNA, RecA interacts with LexA causing an autocatalytic cleavage which disrupts the DNA-binding part of LexA, leading to derepression of the SOS regulon and eventually DNA repair. This Clostridium perfringens (strain 13 / Type A) protein is LexA repressor.